The chain runs to 417 residues: Glucose-1-phosphate adenylyltransferase (417 aa).

Alpha-D-glucose 1-phosphate-binding positions include tyrosine 98, glycine 163, 178 to 179 (EK), and serine 197.

This sequence belongs to the bacterial/plant glucose-1-phosphate adenylyltransferase family. As to quaternary structure, homotetramer.

It catalyses the reaction alpha-D-glucose 1-phosphate + ATP + H(+) = ADP-alpha-D-glucose + diphosphate. It functions in the pathway glycan biosynthesis; glycogen biosynthesis. Involved in the biosynthesis of ADP-glucose, a building block required for the elongation reactions to produce glycogen. Catalyzes the reaction between ATP and alpha-D-glucose 1-phosphate (G1P) to produce pyrophosphate and ADP-Glc. The polypeptide is Glucose-1-phosphate adenylyltransferase (Koribacter versatilis (strain Ellin345)).